Reading from the N-terminus, the 78-residue chain is Putative membrane protein insertion efficiency factor (78 aa).

This sequence belongs to the UPF0161 family.

Its subcellular location is the cell inner membrane. In terms of biological role, could be involved in insertion of integral membrane proteins into the membrane. This is Putative membrane protein insertion efficiency factor from Prochlorococcus marinus subsp. pastoris (strain CCMP1986 / NIES-2087 / MED4).